We begin with the raw amino-acid sequence, 387 residues long: TPR repeat-containing protein SYNPCC7002_A0425 (387 aa).

9 TPR repeats span residues L63–N96, A97–N130, E132–N164, A166–N198, M200–D232, A233–D266, S267–S300, E302–D334, and A336–R368.

The chain is TPR repeat-containing protein SYNPCC7002_A0425 from Picosynechococcus sp. (strain ATCC 27264 / PCC 7002 / PR-6) (Agmenellum quadruplicatum).